Here is an 804-residue protein sequence, read N- to C-terminus: Ral guanine nucleotide dissociation stimulator-like 1 (804 aa).

An N-terminal Ras-GEF domain is found at 101–231; it reads KIRSIRAGTL…RAQSLLEQLR (131 aa). Residues 270–539 form the Ras-GEF domain; the sequence is EVDLVAEQLT…YVLSCEVEGL (270 aa). 2 disordered regions span residues 564–611 and 640–676; these read NDST…TPTH and SASI…GFPP. Low complexity-rich tracts occupy residues 581-607 and 640-649; these read PTGS…SDGM and SASISLASPT. Residues 661-671 show a composition bias toward polar residues; that stretch reads ISLTPLMSPTS. One can recognise a Ras-associating domain in the interval 684-771; the sequence is DACIIRVSLE…FDFLLRLRGS (88 aa).

Its function is as follows. Probable guanine nucleotide exchange factor. In Danio rerio (Zebrafish), this protein is Ral guanine nucleotide dissociation stimulator-like 1 (rgl1).